A 291-amino-acid polypeptide reads, in one-letter code: MKRIALFLITNLAVMAVLGITASLLGFNRYYAATGLDLGALLGFAMVMGFGGAFISLLMSKPMAKWSTGAVVINDSPEPMHRWLVDTVARFSKRAGIEMPEVALYEGEPNAFATGAFKNSALVAVSTGLLQSMSRDEVEAVIGHEVAHVANGDMVTMTLIQGVMNTFVVFLSRAIGYFIDRVVLKNDREGPGIGYMVTTVVLDLLLGLVAAMIVAWFSRQREFRADAGAAQLMGSRVPMQRALARLGGIDPGELPQSVATMGINGRPSGIMALFSSHPPIEDRIRALQQSA.

2 helical membrane-spanning segments follow: residues 4 to 24 and 38 to 58; these read IALF…TASL and LGAL…ISLL. Residue histidine 144 coordinates Zn(2+). The active site involves glutamate 145. Histidine 148 is a binding site for Zn(2+). The next 2 membrane-spanning stretches (helical) occupy residues 159-179 and 197-217; these read LIQG…GYFI and VTTV…VAWF. Residue glutamate 222 participates in Zn(2+) binding.

This sequence belongs to the peptidase M48B family. The cofactor is Zn(2+).

The protein localises to the cell inner membrane. This chain is Protease HtpX homolog, found in Leptothrix cholodnii (strain ATCC 51168 / LMG 8142 / SP-6) (Leptothrix discophora (strain SP-6)).